The sequence spans 520 residues: GMP synthase [glutamine-hydrolyzing] (520 aa).

The region spanning 9-202 (HVLIVDFGSQ…THKIAGLKGD (194 aa)) is the Glutamine amidotransferase type-1 domain. C86 functions as the Nucleophile in the catalytic mechanism. Active-site residues include H176 and E178. A GMPS ATP-PPase domain is found at 203-395 (WTMKAFREEA…LGLPPQFVGR (193 aa)). Residue 230–236 (SGGVDSS) participates in ATP binding.

Homodimer.

It carries out the reaction XMP + L-glutamine + ATP + H2O = GMP + L-glutamate + AMP + diphosphate + 2 H(+). Its pathway is purine metabolism; GMP biosynthesis; GMP from XMP (L-Gln route): step 1/1. In terms of biological role, catalyzes the synthesis of GMP from XMP. This is GMP synthase [glutamine-hydrolyzing] from Phenylobacterium zucineum (strain HLK1).